The sequence spans 181 residues: ATP synthase subunit b (181 aa).

Residues 24–44 traverse the membrane as a helical segment; sequence LFPNLPNFIAHLLATIVLVIV.

Belongs to the ATPase B chain family. As to quaternary structure, F-type ATPases have 2 components, F(1) - the catalytic core - and F(0) - the membrane proton channel. F(1) has five subunits: alpha(3), beta(3), gamma(1), delta(1), epsilon(1). F(0) has three main subunits: a(1), b(2) and c(10-14). The alpha and beta chains form an alternating ring which encloses part of the gamma chain. F(1) is attached to F(0) by a central stalk formed by the gamma and epsilon chains, while a peripheral stalk is formed by the delta and b chains.

The protein resides in the cell membrane. Its function is as follows. F(1)F(0) ATP synthase produces ATP from ADP in the presence of a proton or sodium gradient. F-type ATPases consist of two structural domains, F(1) containing the extramembraneous catalytic core and F(0) containing the membrane proton channel, linked together by a central stalk and a peripheral stalk. During catalysis, ATP synthesis in the catalytic domain of F(1) is coupled via a rotary mechanism of the central stalk subunits to proton translocation. Component of the F(0) channel, it forms part of the peripheral stalk, linking F(1) to F(0). The protein is ATP synthase subunit b of Mycoplasma capricolum subsp. capricolum (strain California kid / ATCC 27343 / NCTC 10154).